A 612-amino-acid chain; its full sequence is Coagulation factor X-activating enzyme heavy chain (612 aa).

A signal peptide spans 1-20 (MMQVLLVTISLAVFPYQGSS). Positions 21–193 (IILESGNVND…KKASQLVATS (173 aa)) are cleaved as a propeptide — or 194. The 195-residue stretch at 201-395 (TFIELVIVVD…YKPKCILNPP (195 aa)) folds into the Peptidase M12B domain. Position 204 (E204) interacts with Ca(2+). A glycan (N-linked (GlcNAc...) asparagine) is linked at N259. Ca(2+) is bound at residue D286. Intrachain disulfides connect C310–C390, C350–C374, and C352–C357. Residue H335 participates in Zn(2+) binding. Residue E336 is part of the active site. Residues H339 and H345 each contribute to the Zn(2+) site. Residues N353 and N373 are each glycosylated (N-linked (GlcNAc...) asparagine). Ca(2+) is bound by residues C390, N393, I405, N408, E412, E415, and D418. The 87-residue stretch at 403–489 (PPICGNEIWE…ECPADGFHAN (87 aa)) folds into the Disintegrin domain. A disulfide bridge connects residues C461 and C481. The short motif at 467–469 (ECD) is the D/ECD-tripeptide element.

This sequence belongs to the venom metalloproteinase (M12B) family. P-III subfamily. P-IIId sub-subfamily. Heterotrimer; disulfide-linked. The heterotrimer consists of 1 heavy chain and 2 light chains (lectins): LC1 and LC2 (AC Q7T045 and AC Q696W1). Requires Zn(2+) as cofactor. In terms of processing, N-glycosylated. Contains 8.0% of hexoses, 2.5% of hexosamines and 2.5% of sialic acids. As to expression, expressed by the venom gland.

The protein localises to the secreted. The catalysed reaction is Specifically activates several components of the blood clotting system, including coagulation factor X, coagulation factor IX and protein C by cleavage of Arg-|-Xaa bonds. Has no action on insulin B chain.. Calcium is required for the activity of the heterotrimer. Its function is as follows. Catalytic subunit of blood coagulation factor X-activating enzyme. Activates coagulation factor X (F10) by cleaving the Arg(234)-Ile(235) bond, activates coagulation factor IX (F9) by cleaving the Arg(226)-Val(227) bond and is also able to activate protein C (PROC). The polypeptide is Coagulation factor X-activating enzyme heavy chain (Macrovipera lebetinus (Levantine viper)).